Here is a 297-residue protein sequence, read N- to C-terminus: MYAQPVTNTKEVKWQKVLYERQPFPDNYVDRRFLEELRKNIHARKYQYWAVVFESSVVIQQLCSVCVFVVIWWYMDEGLLAPHWLLGTGLASSLIGYVLFDLIDGGEGRKKSGQTRWADLKSALVFITFTYGFSPVLKTLTESVSTDTIYAMSVFMLLGHLIFFDYGANAAIVSSTLSLNMAIFASVCLASRLPRSLHAFIMVTFAIQIFALWPMLQKKLKACTPRSYVGVTLLFAFSAVGGLLSISAVGAVLFALLLMSISCLCPFYLIRLQLFKENIHGPWDEAEIKEDLSRFLS.

8 consecutive transmembrane segments (helical) span residues 51–71, 80–100, 117–137, 153–173, 174–194, 196–216, 227–244, and 250–270; these read VVFE…FVVI, LAPH…YVLF, WADL…SPVL, SVFM…AAIV, SSTL…SRLP, SLHA…WPML, SYVG…GGLL, and GAVL…FYLI.

Belongs to the PIGC family. Component of the glycosylphosphatidylinositol-N-acetylglucosaminyltransferase (GPI-GnT) complex composed at least by PIGA, PIGC, PIGH, PIGP, PIGQ, PIGY and DPM2. Interacts with PIGQ. Interacts with the heterodimer PIGA:PIGH.

It is found in the endoplasmic reticulum membrane. It participates in glycolipid biosynthesis; glycosylphosphatidylinositol-anchor biosynthesis. In terms of biological role, part of the glycosylphosphatidylinositol-N-acetylglucosaminyltransferase (GPI-GnT) complex that catalyzes the transfer of N-acetylglucosamine from UDP-N-acetylglucosamine to phosphatidylinositol and participates in the first step of GPI biosynthesis. The polypeptide is Phosphatidylinositol N-acetylglucosaminyltransferase subunit C (Homo sapiens (Human)).